The sequence spans 317 residues: 4-hydroxy-3-methylbut-2-enyl diphosphate reductase (317 aa).

Cys-12 serves as a coordination point for [4Fe-4S] cluster. Residues His-41 and His-74 each coordinate (2E)-4-hydroxy-3-methylbut-2-enyl diphosphate. The dimethylallyl diphosphate site is built by His-41 and His-74. Residues His-41 and His-74 each coordinate isopentenyl diphosphate. Residue Cys-97 coordinates [4Fe-4S] cluster. His-125 contributes to the (2E)-4-hydroxy-3-methylbut-2-enyl diphosphate binding site. His-125 is a dimethylallyl diphosphate binding site. Residue His-125 participates in isopentenyl diphosphate binding. Glu-127 (proton donor) is an active-site residue. Residue Thr-168 participates in (2E)-4-hydroxy-3-methylbut-2-enyl diphosphate binding. Position 198 (Cys-198) interacts with [4Fe-4S] cluster. Residues Ser-226, Ser-227, Asn-228, and Ser-270 each coordinate (2E)-4-hydroxy-3-methylbut-2-enyl diphosphate. Positions 226, 227, 228, and 270 each coordinate dimethylallyl diphosphate. Ser-226, Ser-227, Asn-228, and Ser-270 together coordinate isopentenyl diphosphate.

This sequence belongs to the IspH family. In terms of assembly, homodimer. Requires [4Fe-4S] cluster as cofactor.

It catalyses the reaction isopentenyl diphosphate + 2 oxidized [2Fe-2S]-[ferredoxin] + H2O = (2E)-4-hydroxy-3-methylbut-2-enyl diphosphate + 2 reduced [2Fe-2S]-[ferredoxin] + 2 H(+). The enzyme catalyses dimethylallyl diphosphate + 2 oxidized [2Fe-2S]-[ferredoxin] + H2O = (2E)-4-hydroxy-3-methylbut-2-enyl diphosphate + 2 reduced [2Fe-2S]-[ferredoxin] + 2 H(+). It functions in the pathway isoprenoid biosynthesis; dimethylallyl diphosphate biosynthesis; dimethylallyl diphosphate from (2E)-4-hydroxy-3-methylbutenyl diphosphate: step 1/1. It participates in isoprenoid biosynthesis; isopentenyl diphosphate biosynthesis via DXP pathway; isopentenyl diphosphate from 1-deoxy-D-xylulose 5-phosphate: step 6/6. Its function is as follows. Catalyzes the conversion of 1-hydroxy-2-methyl-2-(E)-butenyl 4-diphosphate (HMBPP) into a mixture of isopentenyl diphosphate (IPP) and dimethylallyl diphosphate (DMAPP). Acts in the terminal step of the DOXP/MEP pathway for isoprenoid precursor biosynthesis. The protein is 4-hydroxy-3-methylbut-2-enyl diphosphate reductase of Serratia proteamaculans (strain 568).